The chain runs to 252 residues: Glucosamine-6-phosphate deaminase (252 aa).

The active-site Proton acceptor; for enolization step is Asp-64. Asn-130 (for ring-opening step) is an active-site residue. The Proton acceptor; for ring-opening step role is filled by His-132. The active-site For ring-opening step is Glu-137.

Belongs to the glucosamine/galactosamine-6-phosphate isomerase family. NagB subfamily.

The catalysed reaction is alpha-D-glucosamine 6-phosphate + H2O = beta-D-fructose 6-phosphate + NH4(+). It functions in the pathway amino-sugar metabolism; N-acetylneuraminate degradation; D-fructose 6-phosphate from N-acetylneuraminate: step 5/5. In terms of biological role, catalyzes the reversible isomerization-deamination of glucosamine 6-phosphate (GlcN6P) to form fructose 6-phosphate (Fru6P) and ammonium ion. The polypeptide is Glucosamine-6-phosphate deaminase (Exiguobacterium sibiricum (strain DSM 17290 / CCUG 55495 / CIP 109462 / JCM 13490 / 255-15)).